We begin with the raw amino-acid sequence, 190 residues long: Segregation and condensation protein B (190 aa).

It belongs to the ScpB family. Homodimer. Homodimerization may be required to stabilize the binding of ScpA to the Smc head domains. Component of a cohesin-like complex composed of ScpA, ScpB and the Smc homodimer, in which ScpA and ScpB bind to the head domain of Smc. The presence of the three proteins is required for the association of the complex with DNA.

The protein localises to the cytoplasm. Participates in chromosomal partition during cell division. May act via the formation of a condensin-like complex containing Smc and ScpA that pull DNA away from mid-cell into both cell halves. This chain is Segregation and condensation protein B, found in Bacillus mycoides (strain KBAB4) (Bacillus weihenstephanensis).